The primary structure comprises 94 residues: Acylphosphatase (94 aa).

The region spanning 8–94 (ALHVIVKGRV…RGYTDFRIEV (87 aa)) is the Acylphosphatase-like domain. Residues R23 and N41 contribute to the active site.

The protein belongs to the acylphosphatase family.

It carries out the reaction an acyl phosphate + H2O = a carboxylate + phosphate + H(+). This Treponema denticola (strain ATCC 35405 / DSM 14222 / CIP 103919 / JCM 8153 / KCTC 15104) protein is Acylphosphatase (acyP).